The chain runs to 234 residues: 2-phospho-L-lactate guanylyltransferase (234 aa).

The protein belongs to the CofC family. As to quaternary structure, homodimer.

The catalysed reaction is (2S)-2-phospholactate + GTP + H(+) = (2S)-lactyl-2-diphospho-5'-guanosine + diphosphate. Its pathway is cofactor biosynthesis; coenzyme F420 biosynthesis. In terms of biological role, guanylyltransferase that catalyzes the activation of (2S)-2-phospholactate (2-PL) as (2S)-lactyl-2-diphospho-5'-guanosine, via the condensation of 2-PL with GTP. It is involved in the biosynthesis of coenzyme F420, a hydride carrier cofactor. This Methanobrevibacter ruminantium (strain ATCC 35063 / DSM 1093 / JCM 13430 / OCM 146 / M1) (Methanobacterium ruminantium) protein is 2-phospho-L-lactate guanylyltransferase.